Here is a 548-residue protein sequence, read N- to C-terminus: Putative malate oxidoreductase [NAD] (548 aa).

The active-site Proton donor is the Tyr96. Lys169 serves as the catalytic Proton acceptor. Glu240, Asp241, and Asp264 together coordinate a divalent metal cation. Residues 297-300 (AGTA), Asn410, and Asn455 each bind NAD(+).

The protein belongs to the malic enzymes family. It depends on Mg(2+) as a cofactor. The cofactor is Mn(2+).

It carries out the reaction (S)-malate + NAD(+) = pyruvate + CO2 + NADH. The enzyme catalyses oxaloacetate + H(+) = pyruvate + CO2. This is Putative malate oxidoreductase [NAD] (mez) from Mycobacterium tuberculosis (strain CDC 1551 / Oshkosh).